The following is a 431-amino-acid chain: Beta-lactamase hydrolase-like protein (431 aa).

The Zn(2+) site is built by His212, His214, and His286. Asp309 is a binding site for substrate.

It belongs to the metallo-beta-lactamase superfamily. The cofactor is Zn(2+).

In terms of biological role, could play a role in cell adherence or biofilm development. In Xylella fastidiosa (strain Temecula1 / ATCC 700964), this protein is Beta-lactamase hydrolase-like protein.